The following is a 103-amino-acid chain: Flagellar hook-basal body complex protein FliE (103 aa).

The protein belongs to the FliE family.

The protein localises to the bacterial flagellum basal body. The sequence is that of Flagellar hook-basal body complex protein FliE from Cronobacter sakazakii (strain ATCC BAA-894) (Enterobacter sakazakii).